The primary structure comprises 102 residues: Small ribosomal subunit protein uS10 (102 aa).

The protein belongs to the universal ribosomal protein uS10 family. Part of the 30S ribosomal subunit.

Functionally, involved in the binding of tRNA to the ribosomes. The chain is Small ribosomal subunit protein uS10 from Streptococcus mutans serotype c (strain ATCC 700610 / UA159).